We begin with the raw amino-acid sequence, 502 residues long: ATP synthase subunit alpha (502 aa).

ATP is bound at residue 169 to 176 (GDRQTGKT).

It belongs to the ATPase alpha/beta chains family. As to quaternary structure, F-type ATPases have 2 components, CF(1) - the catalytic core - and CF(0) - the membrane proton channel. CF(1) has five subunits: alpha(3), beta(3), gamma(1), delta(1), epsilon(1). CF(0) has three main subunits: a(1), b(2) and c(9-12). The alpha and beta chains form an alternating ring which encloses part of the gamma chain. CF(1) is attached to CF(0) by a central stalk formed by the gamma and epsilon chains, while a peripheral stalk is formed by the delta and b chains.

It localises to the cell membrane. It catalyses the reaction ATP + H2O + 4 H(+)(in) = ADP + phosphate + 5 H(+)(out). Its function is as follows. Produces ATP from ADP in the presence of a proton gradient across the membrane. The alpha chain is a regulatory subunit. The polypeptide is ATP synthase subunit alpha (Streptococcus pyogenes serotype M18 (strain MGAS8232)).